We begin with the raw amino-acid sequence, 142 residues long: Putative pre-16S rRNA nuclease (142 aa).

The protein belongs to the YqgF nuclease family.

It localises to the cytoplasm. Could be a nuclease involved in processing of the 5'-end of pre-16S rRNA. The sequence is that of Putative pre-16S rRNA nuclease from Nitratidesulfovibrio vulgaris (strain DSM 19637 / Miyazaki F) (Desulfovibrio vulgaris).